The primary structure comprises 309 residues: Methionyl-tRNA formyltransferase (309 aa).

110–113 (SLLP) lines the (6S)-5,6,7,8-tetrahydrofolate pocket. Residues 289–309 (KRMAATDWARGSRIEQGERLK) are disordered. Residues 298–309 (RGSRIEQGERLK) show a composition bias toward basic and acidic residues.

This sequence belongs to the Fmt family.

It catalyses the reaction L-methionyl-tRNA(fMet) + (6R)-10-formyltetrahydrofolate = N-formyl-L-methionyl-tRNA(fMet) + (6S)-5,6,7,8-tetrahydrofolate + H(+). Attaches a formyl group to the free amino group of methionyl-tRNA(fMet). The formyl group appears to play a dual role in the initiator identity of N-formylmethionyl-tRNA by promoting its recognition by IF2 and preventing the misappropriation of this tRNA by the elongation apparatus. This Saccharopolyspora erythraea (strain ATCC 11635 / DSM 40517 / JCM 4748 / NBRC 13426 / NCIMB 8594 / NRRL 2338) protein is Methionyl-tRNA formyltransferase.